The chain runs to 558 residues: Glutamine--tRNA ligase (558 aa).

Positions 36–46 (PEPNGYLHIGH) match the 'HIGH' region motif. ATP contacts are provided by residues 37-39 (EPN) and 43-49 (HIGHAKS). Residues D69 and Y214 each contribute to the L-glutamine site. Residues T233, 263–264 (RL), and 271–273 (LSK) each bind ATP. The short motif at 270-274 (LLSKR) is the 'KMSKS' region element.

This sequence belongs to the class-I aminoacyl-tRNA synthetase family. Monomer.

It localises to the cytoplasm. The enzyme catalyses tRNA(Gln) + L-glutamine + ATP = L-glutaminyl-tRNA(Gln) + AMP + diphosphate. This chain is Glutamine--tRNA ligase, found in Bradyrhizobium diazoefficiens (strain JCM 10833 / BCRC 13528 / IAM 13628 / NBRC 14792 / USDA 110).